The primary structure comprises 123 residues: Small ribosomal subunit protein uS12c (123 aa).

Polar residues predominate over residues 1–20 (MPTIQQLIRNTRQPTQNRTK). Residues 1–27 (MPTIQQLIRNTRQPTQNRTKSPALKAC) are disordered.

Belongs to the universal ribosomal protein uS12 family. As to quaternary structure, part of the 30S ribosomal subunit.

The protein resides in the plastid. Its subcellular location is the chloroplast. Its function is as follows. With S4 and S5 plays an important role in translational accuracy. Located at the interface of the 30S and 50S subunits. The chain is Small ribosomal subunit protein uS12c (rps12) from Zygnema circumcarinatum (Green alga).